Reading from the N-terminus, the 149-residue chain is Transcriptional repressor NrdR (149 aa).

A zinc finger spans residues 3–34; sequence CPFCSHLETQVIETRVFEDAASIRRRRQCAAC. The ATP-cone domain maps to 49–139; sequence PAVVKKDGRR…VYRSFEGIDD (91 aa).

It belongs to the NrdR family. The cofactor is Zn(2+).

Functionally, negatively regulates transcription of bacterial ribonucleotide reductase nrd genes and operons by binding to NrdR-boxes. This chain is Transcriptional repressor NrdR, found in Verminephrobacter eiseniae (strain EF01-2).